The primary structure comprises 443 residues: Signal recognition particle 54 kDa protein (443 aa).

GTP is bound by residues 104–111 (GLQGSGKT), 184–188 (DTAGR), and 242–245 (TKLD).

It belongs to the GTP-binding SRP family. SRP54 subfamily. Part of the signal recognition particle protein translocation system, which is composed of SRP and FtsY. Archaeal SRP consists of a 7S RNA molecule of 300 nucleotides and two protein subunits: SRP54 and SRP19.

The protein localises to the cytoplasm. The catalysed reaction is GTP + H2O = GDP + phosphate + H(+). In terms of biological role, involved in targeting and insertion of nascent membrane proteins into the cytoplasmic membrane. Binds to the hydrophobic signal sequence of the ribosome-nascent chain (RNC) as it emerges from the ribosomes. The SRP-RNC complex is then targeted to the cytoplasmic membrane where it interacts with the SRP receptor FtsY. The polypeptide is Signal recognition particle 54 kDa protein (Methanosarcina mazei (strain ATCC BAA-159 / DSM 3647 / Goe1 / Go1 / JCM 11833 / OCM 88) (Methanosarcina frisia)).